The following is a 448-amino-acid chain: MSASAVNVNPGRNVVVVGTQWGDEGKGKIVDWLTDHAQGVVRFQGGHNAGHTLIIGGKKTILRLIPSGIMHPGVACYIGNGVVLSPEALFKEIGELEAAGVDVQNRLFISEATTLILPYHIAIDQGREARRGAGKIGTTGRGIGPAYEDKVARRGLRVQDLFEPETFAERLRENLDYHNFVLTQYLGVAAVDFQQTLDTMLSYADRLKPMVTDVSRRLYDANAAGSNLLFEGAQGTLLDIDHGTYPYVTSSNCVAGAATAGAGVGPQKLNYILGITKAYCTRVGSGPFPSELYDADNAARQEAIGLELATVGKEFGSVTGRPRRTGWLDVAALRRSIQINGVSGLCMTKLDVLDGLDEVKLCVGYTVDGNHVDLLPRGSSEVARCEPVYETFAGWKESTVGIKEWDKLPANARAYLSRVQEVAGIPIDMVSTGPDRDETILLRHPFKV.

GTP-binding positions include 22 to 28 and 50 to 52; these read GDEGKGK and GHT. The active-site Proton acceptor is the D23. Positions 23 and 50 each coordinate Mg(2+). IMP-binding positions include 23 to 26, 48 to 51, T139, R153, Q234, T249, and R321; these read DEGK and NAGH. The active-site Proton donor is H51. 317–323 is a substrate binding site; the sequence is SVTGRPR. Residues R323, 349–351, and 431–433 contribute to the GTP site; these read KLD and STG.

Belongs to the adenylosuccinate synthetase family. In terms of assembly, homodimer. Requires Mg(2+) as cofactor.

Its subcellular location is the cytoplasm. It catalyses the reaction IMP + L-aspartate + GTP = N(6)-(1,2-dicarboxyethyl)-AMP + GDP + phosphate + 2 H(+). It participates in purine metabolism; AMP biosynthesis via de novo pathway; AMP from IMP: step 1/2. Functionally, plays an important role in the de novo pathway of purine nucleotide biosynthesis. Catalyzes the first committed step in the biosynthesis of AMP from IMP. In Paraburkholderia phytofirmans (strain DSM 17436 / LMG 22146 / PsJN) (Burkholderia phytofirmans), this protein is Adenylosuccinate synthetase.